A 91-amino-acid polypeptide reads, in one-letter code: Sec-independent protein translocase protein TatA (91 aa).

Residues 1 to 21 form a helical membrane-spanning segment; sequence MGIFDWKHWIVILIVVVLVFG. Residues 41-91 form a disordered region; that stretch reads KAMNDDDKPAEQPAPQPQQAQPAPQGSPLNQPHTIDAQAHKVDEPIRKDQV. A compositionally biased stretch (low complexity) spans 51–64; the sequence is EQPAPQPQQAQPAP. Over residues 78-91 the composition is skewed to basic and acidic residues; the sequence is QAHKVDEPIRKDQV.

Belongs to the TatA/E family. The Tat system comprises two distinct complexes: a TatABC complex, containing multiple copies of TatA, TatB and TatC subunits, and a separate TatA complex, containing only TatA subunits. Substrates initially bind to the TatABC complex, which probably triggers association of the separate TatA complex to form the active translocon.

The protein resides in the cell inner membrane. Part of the twin-arginine translocation (Tat) system that transports large folded proteins containing a characteristic twin-arginine motif in their signal peptide across membranes. TatA could form the protein-conducting channel of the Tat system. The protein is Sec-independent protein translocase protein TatA of Pseudomonas syringae pv. syringae (strain B728a).